A 628-amino-acid polypeptide reads, in one-letter code: Cytoplasmic dynein 1 intermediate chain 1 (628 aa).

Basic and acidic residues-rich tracts occupy residues 1–13 (MSDK…ELER) and 20–60 (QIRE…RETE). The tract at residues 1–114 (MSDKSDLKAE…RTLQWDTDPS (114 aa)) is disordered. Serine 2 carries the N-acetylserine modification. Serine 50 is modified (phosphoserine). The span at 70-79 (PEPPLVPTPM) shows a compositional bias: pro residues. Positions 80 to 90 (SPSSKSVSTPS) are enriched in low complexity. Serine 83 is modified (phosphoserine). Position 88 is a phosphothreonine (threonine 88). Residues serine 90, serine 94, and serine 97 each carry the phosphoserine modification. Positions 105–114 (RTLQWDTDPS) are enriched in polar residues. Positions 130–146 (KLGVSKVTQVDFLPREV) are interaction with DYNLT1. The interval 152 to 204 (ETQTPLATHQSEEDEEDEEMVEPKIGHDSELENQEKKQETKEAPPRELTEEEK) is disordered. A Phosphothreonine modification is found at threonine 159. Phosphoserine is present on residues serine 162 and serine 180. Basic and acidic residues predominate over residues 172 to 204 (VEPKIGHDSELENQEKKQETKEAPPRELTEEEK). WD repeat units lie at residues 268–317 (SKHR…TTPE), 321–361 (HCQS…RTPV), 370–411 (AHTH…TPQE), 420–460 (SKPV…AGIG), 465–510 (GHQG…PLYS), 513–553 (DNAD…EVPT), and 559–598 (EGAS…VPHN). Residue serine 618 is modified to Phosphoserine.

This sequence belongs to the dynein intermediate chain family. Homodimer. The cytoplasmic dynein 1 complex consists of two catalytic heavy chains (HCs) and a number of non-catalytic subunits presented by intermediate chains (ICs), light intermediate chains (LICs) and light chains (LCs); the composition seems to vary in respect to the IC, LIC and LC composition. The heavy chain homodimer serves as a scaffold for the probable homodimeric assembly of the respective non-catalytic subunits. The ICs and LICs bind directly to the HC dimer and the LCs assemble on the IC dimer. Interacts with DYNC1H1. Interacts with DYNLT1 and DYNLT3. Interacts with DCTN1. Interacts with DYNLL2. Interacts with MCRS1; the interaction is required for the proper distribution of centriolar satellites.

The protein resides in the cytoplasm. The protein localises to the chromosome. It is found in the centromere. It localises to the kinetochore. Its subcellular location is the cytoskeleton. The protein resides in the spindle pole. In terms of biological role, acts as one of several non-catalytic accessory components of the cytoplasmic dynein 1 complex that are thought to be involved in linking dynein to cargos and to adapter proteins that regulate dynein function. Cytoplasmic dynein 1 acts as a motor for the intracellular retrograde motility of vesicles and organelles along microtubules. The intermediate chains mediate the binding of dynein to dynactin via its 150 kDa component (p150-glued) DCTN1. May play a role in mediating the interaction of cytoplasmic dynein with membranous organelles and kinetochores. The chain is Cytoplasmic dynein 1 intermediate chain 1 (Dync1i1) from Mus musculus (Mouse).